The primary structure comprises 520 residues: 2-methylcitrate dehydratase, mitochondrial (520 aa).

The transit peptide at 1–37 (MRAFRSAANFGAASNIYRKSFTPASIASNRFVSARMS) directs the protein to the mitochondrion.

The protein belongs to the PrpD family. Monomer.

The protein resides in the mitochondrion. It carries out the reaction (2S,3S)-2-methylcitrate = 2-methyl-cis-aconitate + H2O. The protein operates within organic acid metabolism; propanoate degradation. Several bivalent metal ions, such as nickel, copper, zinc, mercury, and lead, inhibit the activity to some extent. Inhibited by structural analogs such as citrate, cis-aconitate, isocitrate, 2-methylisocitrate, tricarballylate and fluorocitrate, but not by trans-aconitate or adipate. Component of the methylcitrate cycle that catalyzes the dehydration of 2-methylcitrate to 2-methyl-cis-aconitate. The methylcitrate cycle is a metabolic pathway for the consumption of propionic acid. The sequence is that of 2-methylcitrate dehydratase, mitochondrial from Yarrowia lipolytica (strain CLIB 122 / E 150) (Yeast).